The primary structure comprises 2148 residues: Polyketide synthase 1 (2148 aa).

Residues 19–261 (FIFGDQSSCN…TPLAVHAPYH (243 aa)) form an N-terminal acylcarrier protein transacylase domain (SAT) region. Residues 394–829 (DSKIAIIGMS…GGNTALLVED (436 aa)) enclose the Ketosynthase family 3 (KS3) domain. Catalysis depends on for beta-ketoacyl synthase activity residues cysteine 566, histidine 701, and histidine 745. Positions 929-1233 (AFVFSGQGSQ…PSLMRNKDGW (305 aa)) are malonyl-CoA:ACP transacylase (MAT) domain. The active-site For acyl/malonyl transferase activity is the serine 1018. Positions 1310–1624 (TASVHRIVHE…RKVLNTAMPP (315 aa)) are product template (PT) domain. The N-terminal hotdog fold stretch occupies residues 1314 to 1447 (HRIVHESVDK…SSLHFEQPKV (134 aa)). The PKS/mFAS DH domain occupies 1314–1619 (HRIVHESVDK…FQGIPRKVLN (306 aa)). Histidine 1346 acts as the Proton acceptor; for dehydratase activity in catalysis. The interval 1474–1619 (LNSRMSSGVI…FQGIPRKVLN (146 aa)) is C-terminal hotdog fold. The Proton donor; for dehydratase activity role is filled by aspartate 1533. The tract at residues 1619–1655 (NTAMPPPKSQNEAQVHSSPAKSRPKPPGSASSVHSGR) is disordered. A compositionally biased stretch (polar residues) spans 1627 to 1638 (SQNEAQVHSSPA). Residues 1678–1752 (RDPMQALFKI…DLATHLGFDT (75 aa)) enclose the Carrier 1 domain. The residue at position 1712 (serine 1712) is an O-(pantetheine 4'-phosphoryl)serine. The span at 1756–1769 (DQSSGQSSSCGGLS) shows a compositional bias: low complexity. Residues 1756 to 1796 (DQSSGQSSSCGGLSPRSDSTGEITSNATTPPSLSPRGSVSG) form a disordered region. A compositionally biased stretch (polar residues) spans 1771–1796 (RSDSTGEITSNATTPPSLSPRGSVSG). Positions 1793-1870 (SVSGSQCKDV…SFKHMFQQGH (78 aa)) constitute a Carrier 2 domain. Serine 1830 bears the O-(pantetheine 4'-phosphoryl)serine mark. A thioesterase (TE) domain region spans residues 1882 to 2146 (LKQYRATSTL…ERVAAFIRST (265 aa)). Serine 1973 functions as the For thioesterase activity in the catalytic mechanism.

Functionally, polyketide synthase; part of the Pks1 gene cluster that mediates the biosynthesis of an anthraquinone derivative pigment that contributes to conidial pigmentation that provides protection from UV radiation, heat and cold stress. The polyketide synthase Pks1 produces 1-acetyl-2,4,6,8-tetrahydroxy-9,10-anthraquinone though condensation of acetyl-CoA with malonyl-CoA. The dehydratase EthD and the laccase Mlac1 further convert the anthraquinone derivative into the final conidial pigment. The polypeptide is Polyketide synthase 1 (Metarhizium acridum (strain CQMa 102)).